Here is an 871-residue protein sequence, read N- to C-terminus: Protein pob1 (871 aa).

Residues 2-65 (ASQRFVIALH…PASHVELISD (64 aa)) form the SH3 domain. Positions 42-168 (WWEGEDEQGN…PSSDLSNFNT (127 aa)) are disordered. Over residues 62–80 (LISDERSDSSDSRRGKEDF) the composition is skewed to basic and acidic residues. Composition is skewed to low complexity over residues 88 to 100 (TRSSLSSSRSTSS) and 109 to 124 (LYSNNSLSSSHSSILN). Residues 131–168 (SKPSVPSNFNSMFPSSKQEGPSPLLDNQPSSDLSNFNT) show a composition bias toward polar residues. A phosphoserine mark is found at S224 and S225. Y229 carries the post-translational modification Phosphotyrosine. The residue at position 241 (S241) is a Phosphoserine. In terms of domain architecture, SAM spans 250–313 (WSTEEVVEWL…LRKIQQLKDS (64 aa)). Residues 329–343 (ISVSQSSDSSSSIPK) show a composition bias toward low complexity. Disordered regions lie at residues 329 to 371 (ISVS…NRPT) and 384 to 670 (PDLD…KSKR). 2 stretches are compositionally biased toward polar residues: residues 384–395 (PDLDSSPSTDWN) and 404–451 (TPSS…NSGL). Phosphoserine occurs at positions 433, 439, and 440. T442 bears the Phosphothreonine mark. A Phosphoserine modification is found at S444. Residues 456–467 (TEPISSPSTSSI) show a composition bias toward low complexity. Polar residues predominate over residues 492–511 (QPSSNVPTKFTGGASESSSV). The residue at position 549 (S549) is a Phosphoserine. Over residues 549-560 (SPSSISSRLPSS) the composition is skewed to low complexity. Polar residues-rich tracts occupy residues 561 to 574 (NLEQGSSSSVTKSP) and 583 to 606 (KASSPVTSKGVSINEKSAVNNYAT). The PH domain maps to 698 to 808 (TADCHGWMRK…WSSAFLKATV (111 aa)).

The protein resides in the cytoplasm. Its subcellular location is the membrane. Has a role in cell elongation and separation. The chain is Protein pob1 (pob1) from Schizosaccharomyces pombe (strain 972 / ATCC 24843) (Fission yeast).